Consider the following 395-residue polypeptide: Digeranylgeranylglycerophospholipid reductase (395 aa).

FAD contacts are provided by Ala-15, Asp-34, Cys-45, Ala-46, Ala-48, Arg-97, Ala-121, Asp-276, and Gly-288. Arg-329 serves as a coordination point for a 2,3-bis-O-(geranylgeranyl)-sn-glycerol 1-phospholipid.

Belongs to the geranylgeranyl reductase family. DGGGPL reductase subfamily. The cofactor is FAD.

It carries out the reaction a 2,3-bis-O-phytanyl-sn-glycerol 1-phospholipid + 8 A = a 2,3-bis-O-(geranylgeranyl)-sn-glycerol 1-phospholipid + 8 AH2. The catalysed reaction is 2,3-bis-O-(phytanyl)-sn-glycerol 1-phosphate + 8 A = 2,3-bis-O-(geranylgeranyl)-sn-glycerol 1-phosphate + 8 AH2. It catalyses the reaction CDP-2,3-bis-O-(geranylgeranyl)-sn-glycerol + 8 AH2 = CDP-2,3-bis-O-(phytanyl)-sn-glycerol + 8 A. The enzyme catalyses archaetidylserine + 8 AH2 = 2,3-bis-O-phytanyl-sn-glycero-3-phospho-L-serine + 8 A. The protein operates within membrane lipid metabolism; glycerophospholipid metabolism. Functionally, is involved in the reduction of 2,3-digeranylgeranylglycerophospholipids (unsaturated archaeols) into 2,3-diphytanylglycerophospholipids (saturated archaeols) in the biosynthesis of archaeal membrane lipids. Catalyzes the formation of archaetidic acid (2,3-di-O-phytanyl-sn-glyceryl phosphate) from 2,3-di-O-geranylgeranylglyceryl phosphate (DGGGP) via the hydrogenation of each double bond of the isoprenoid chains. Is also probably able to reduce double bonds of geranyl groups in CDP-2,3-bis-O-(geranylgeranyl)-sn-glycerol and archaetidylserine, thus acting at various stages in the biosynthesis of archaeal membrane lipids. The chain is Digeranylgeranylglycerophospholipid reductase from Thermococcus kodakarensis (strain ATCC BAA-918 / JCM 12380 / KOD1) (Pyrococcus kodakaraensis (strain KOD1)).